The chain runs to 452 residues: tRNA modification GTPase MnmE (452 aa).

(6S)-5-formyl-5,6,7,8-tetrahydrofolate contacts are provided by Arg21, Glu78, and Lys118. The 162-residue stretch at 214-375 (GMKAVIAGRP…LREHLKTSMG (162 aa)) folds into the TrmE-type G domain. Residue Asn224 coordinates K(+). Residues 224–229 (NAGKSS), 243–249 (TNIAGTT), and 268–271 (DTAG) each bind GTP. Residue Ser228 participates in Mg(2+) binding. Positions 243, 245, and 248 each coordinate K(+). Thr249 contacts Mg(2+). Position 452 (Lys452) interacts with (6S)-5-formyl-5,6,7,8-tetrahydrofolate.

The protein belongs to the TRAFAC class TrmE-Era-EngA-EngB-Septin-like GTPase superfamily. TrmE GTPase family. Homodimer. Heterotetramer of two MnmE and two MnmG subunits. The cofactor is K(+).

Its subcellular location is the cytoplasm. Functionally, exhibits a very high intrinsic GTPase hydrolysis rate. Involved in the addition of a carboxymethylaminomethyl (cmnm) group at the wobble position (U34) of certain tRNAs, forming tRNA-cmnm(5)s(2)U34. This Haemophilus ducreyi (strain 35000HP / ATCC 700724) protein is tRNA modification GTPase MnmE.